A 230-amino-acid polypeptide reads, in one-letter code: Acyl-protein thioesterase 1 (230 aa).

Residues serine 119, aspartate 174, and histidine 208 each act as charge relay system in the active site. Lysine 224 is modified (N6-acetyllysine).

It belongs to the AB hydrolase superfamily. AB hydrolase 2 family. As to quaternary structure, homodimer.

The protein resides in the cytoplasm. It is found in the cell membrane. It localises to the nucleus membrane. Its subcellular location is the endoplasmic reticulum. The enzyme catalyses S-hexadecanoyl-L-cysteinyl-[protein] + H2O = L-cysteinyl-[protein] + hexadecanoate + H(+). It catalyses the reaction 1-hexadecanoyl-sn-glycero-3-phosphocholine + H2O = sn-glycerol 3-phosphocholine + hexadecanoate + H(+). The catalysed reaction is a 1-(9Z-octadecenoyl)-2-acyl-sn-glycero-3-phosphocholine + H2O = a 2-acyl-sn-glycero-3-phosphocholine + (9Z)-octadecenoate + H(+). Acts as an acyl-protein thioesterase. Hydrolyzes fatty acids from S-acylated cysteine residues in proteins such as trimeric G alpha proteins or HRAS. Acts as a palmitoyl thioesterase that catalyzes depalmitoylation of proteins, such as ADRB2, KCNMA1 and SQSTM1. Acts as a negative regulator of autophagy by mediating palmitoylation of SQSTM1, decreasing affinity between SQSTM1 and ATG8 proteins and recruitment of ubiquitinated cargo proteins to autophagosomes. Acts as a lysophospholipase and hydrolyzes lysophosphatidylcholine (lyso-PC). Also hydrolyzes lysophosphatidylethanolamine (lyso-PE), lysophosphatidylinositol (lyso-PI) and lysophosphatidylserine (lyso-PS). Has much higher thioesterase activity than lysophospholipase activity. Contributes to the production of lysophosphatidic acid (LPA) during blood coagulation by recognizing and cleaving plasma phospholipids to generate lysophospholipids which in turn act as substrates for ENPP2 to produce LPA. The polypeptide is Acyl-protein thioesterase 1 (LYPLA1) (Pongo abelii (Sumatran orangutan)).